The chain runs to 385 residues: GDP-D-glucose phosphorylase 1 (385 aa).

Catalysis depends on His-218, which acts as the Tele-GMP-histidine intermediate.

Belongs to the GDPGP1 family.

It is found in the cytoplasm. The enzyme catalyses GDP-alpha-D-glucose + phosphate = alpha-D-glucose 1-phosphate + GDP + H(+). Functionally, specific and highly efficient GDP-D-glucose phosphorylase regulating the levels of GDP-D-glucose in cells. The protein is GDP-D-glucose phosphorylase 1 (GDPGP1) of Macaca fascicularis (Crab-eating macaque).